Consider the following 109-residue polypeptide: V-type proton ATPase 16 kDa proteolipid subunit (109 aa).

Residues 1–20 (VPVVMAGVLGIYGLIIAVII) form a helical membrane-spanning segment. The Lumenal portion of the chain corresponds to 21 to 39 (STGINPKAKPYYLFDGYAH). A helical membrane pass occupies residues 40-61 (LSSGLACGLAGLAAGMAIGIVG). Over 62–73 (DAGVRANAQQPK) the chain is Cytoplasmic. The chain crosses the membrane as a helical span at residues 74–99 (LFVGMILILIFAEALALYGLIVGIIL). Over 100–109 (SSRAGQSRAD) the chain is Lumenal.

This sequence belongs to the V-ATPase proteolipid subunit family. As to quaternary structure, V-ATPase is a heteromultimeric enzyme composed of a peripheral catalytic V1 complex (main components: subunits A, B, C, D, E, and F) attached to an integral membrane V0 proton pore complex (main component: the proteolipid protein; which is present as a hexamer that forms the proton-conducting pore). High expression in the mesocotyl tip of etiolated seedlings compared to the base.

Its subcellular location is the vacuole membrane. Its function is as follows. Proton-conducting pore forming subunit of the membrane integral V0 complex of vacuolar ATPase. V-ATPase is responsible for acidifying a variety of intracellular compartments in eukaryotic cells. The chain is V-type proton ATPase 16 kDa proteolipid subunit from Zea mays (Maize).